Reading from the N-terminus, the 466-residue chain is Asparagine--tRNA ligase (466 aa).

Belongs to the class-II aminoacyl-tRNA synthetase family. In terms of assembly, homodimer.

It localises to the cytoplasm. It catalyses the reaction tRNA(Asn) + L-asparagine + ATP = L-asparaginyl-tRNA(Asn) + AMP + diphosphate + H(+). In Shewanella sp. (strain MR-7), this protein is Asparagine--tRNA ligase.